Consider the following 166-residue polypeptide: HTH-type transcriptional regulator PetP (166 aa).

One can recognise an HTH marR-type domain in the interval 17 to 152 (DEQLRKGIEA…FRQVLEAMMD (136 aa)). The segment at residues 66–89 (VTTLISVLGVTKQSLNRVLRTLID) is a DNA-binding region (H-T-H motif).

Necessary for photosynthetic and respiratory growth. The sequence is that of HTH-type transcriptional regulator PetP (petP) from Rhodobacter capsulatus (strain ATCC BAA-309 / NBRC 16581 / SB1003).